A 302-amino-acid chain; its full sequence is MNRTVKVAILGSGNIGTDLMYKILKKRWVLELSMIAGIDPQSEGLARARAEGVYATAGGIDAILEDPEIKIVFDATSAKAHLKHAKRLKEAGKVAIDLTPAAVGPYVVPPVNLMEHVDKDNVNLITCGGQATIPLVYAVSRVANVKYAEMVSTVSSSSAGPGTRQNIDEFTFTTSRGLEVIGGAEKGKAIIILNPAKPPILMRNTVYIAYEDGDDHQIRHSIGQMIHDVQQYVPGYRLKGEPIFDRRETPKGRLDVVILLLEVEGAGDFLPVSAGNLDIMTASAKQVGEVIAKRLIEMTSTA.

12 to 15 is an NAD(+) binding site; it reads SGNI. The active-site Acyl-thioester intermediate is Cys-127. NAD(+) is bound by residues 158 to 166 and Asn-276; that span reads SAGPGTRQN.

It belongs to the acetaldehyde dehydrogenase family.

The enzyme catalyses acetaldehyde + NAD(+) + CoA = acetyl-CoA + NADH + H(+). In Geobacillus genomosp. 3, this protein is Acetaldehyde dehydrogenase (nahO).